Here is a 56-residue protein sequence, read N- to C-terminus: MAYKIADSCVSCGACASECPVNAISQGDSIFVIDADTCIDCGNCANVCPVGAPVQE.

4Fe-4S ferredoxin-type domains lie at 2–28 (AYKIADSCVSCGACASECPVNAISQGD) and 29–56 (SIFVIDADTCIDCGNCANVCPVGAPVQE). The [4Fe-4S] cluster site is built by cysteine 9, cysteine 12, cysteine 15, cysteine 19, cysteine 38, cysteine 41, cysteine 44, and cysteine 48.

Requires [4Fe-4S] cluster as cofactor.

Functionally, ferredoxins are iron-sulfur proteins that transfer electrons in a wide variety of metabolic reactions. The polypeptide is Ferredoxin (Clostridium pasteurianum).